A 294-amino-acid polypeptide reads, in one-letter code: Acetylglutamate kinase (294 aa).

Substrate-binding positions include 67–68 (GG), Arg89, and Asn191.

This sequence belongs to the acetylglutamate kinase family. ArgB subfamily.

It is found in the cytoplasm. It carries out the reaction N-acetyl-L-glutamate + ATP = N-acetyl-L-glutamyl 5-phosphate + ADP. The protein operates within amino-acid biosynthesis; L-arginine biosynthesis; N(2)-acetyl-L-ornithine from L-glutamate: step 2/4. Catalyzes the ATP-dependent phosphorylation of N-acetyl-L-glutamate. The polypeptide is Acetylglutamate kinase (Methylobacillus flagellatus (strain ATCC 51484 / DSM 6875 / VKM B-1610 / KT)).